Here is a 187-residue protein sequence, read N- to C-terminus: Large ribosomal subunit protein uL22 (187 aa).

It belongs to the universal ribosomal protein uL22 family.

This is Large ribosomal subunit protein uL22 (RPL17) from Theileria annulata.